A 540-amino-acid chain; its full sequence is Chaperonin GroEL (540 aa).

ATP is bound by residues 29 to 32 (TIGP), 86 to 90 (DGTTT), G413, 477 to 479 (NAA), and D493.

It belongs to the chaperonin (HSP60) family. In terms of assembly, forms a cylinder of 14 subunits composed of two heptameric rings stacked back-to-back. Interacts with the co-chaperonin GroES.

Its subcellular location is the cytoplasm. The enzyme catalyses ATP + H2O + a folded polypeptide = ADP + phosphate + an unfolded polypeptide.. Together with its co-chaperonin GroES, plays an essential role in assisting protein folding. The GroEL-GroES system forms a nano-cage that allows encapsulation of the non-native substrate proteins and provides a physical environment optimized to promote and accelerate protein folding. The protein is Chaperonin GroEL of Lactobacillus helveticus (strain DPC 4571).